The chain runs to 256 residues: Transmembrane protein 74B (256 aa).

Positions 1–111 (MPPAQGYEFA…LSLHSEEGPA (111 aa)) are disordered. Over residues 80-96 (RLGSSPSPPGGVSSLPR) the composition is skewed to low complexity. Positions 97–108 (SQRDDLSLHSEE) are enriched in basic and acidic residues. 2 consecutive transmembrane segments (helical) span residues 123–143 (FVSA…AYAI) and 177–197 (IIAG…LLMV).

The protein belongs to the TMEM74 family.

The protein resides in the membrane. This Homo sapiens (Human) protein is Transmembrane protein 74B (TMEM74B).